Here is a 216-residue protein sequence, read N- to C-terminus: uncharacterized protein (216 aa).

This is an uncharacterized protein from Saccharomyces cerevisiae (strain ATCC 204508 / S288c) (Baker's yeast).